Consider the following 394-residue polypeptide: Guanine nucleotide-binding protein G(s) subunit alpha (394 aa).

Residues 1–23 are disordered; it reads MGCLGNSKTEDQRNEEKAQREAN. Gly2 carries the N-palmitoyl glycine lipid modification. Residue Cys3 is the site of S-palmitoyl cysteine attachment. The span at 8–23 shows a compositional bias: basic and acidic residues; the sequence is KTEDQRNEEKAQREAN. In terms of domain architecture, G-alpha spans 39-394; that stretch reads ATHRLLLLGA…RMHLRQYELL (356 aa). Residues 42-55 form a G1 motif region; sequence RLLLLGAGESGKST. 47–55 is a GTP binding site; sequence GAGESGKST. Ser54 contacts Mg(2+). Residues 68-91 are disordered; it reads FNGEGGEEDPQAARSNSDGEKATK. A G2 motif region spans residues 196 to 204; sequence DLLRCRVLT. GTP-binding positions include 197 to 204, 223 to 227, 292 to 295, and Ala366; these read LLRCRVLT, DVGGQ, and NKQD. Thr204 lines the Mg(2+) pocket. Residues 219-228 form a G3 motif region; sequence FHMFDVGGQR. The interval 288–295 is G4 motif; it reads ILFLNKQD. A G5 motif region spans residues 364-369; it reads TCAVDT.

This sequence belongs to the G-alpha family. G(s) subfamily. Heterotrimeric G proteins are composed of 3 units; alpha, beta and gamma. The alpha chain contains the guanine nucleotide binding site. Interacts with CRY1; the interaction may block GPCR-mediated regulation of cAMP concentrations. Interacts with ADCY6 and stimulates its adenylyl cyclase activity. Interacts with ADCY2 and ADCY5. Stimulates the ADCY5 adenylyl cyclase activity. Interaction with SASH1.

The protein resides in the cell membrane. Guanine nucleotide-binding proteins (G proteins) function as transducers in numerous signaling pathways controlled by G protein-coupled receptors (GPCRs). Signaling involves the activation of adenylyl cyclases, resulting in increased levels of the signaling molecule cAMP. GNAS functions downstream of several GPCRs, including beta-adrenergic receptors. Stimulates the Ras signaling pathway via RAPGEF2. The chain is Guanine nucleotide-binding protein G(s) subunit alpha (GNAS) from Canis lupus familiaris (Dog).